The following is a 56-amino-acid chain: Large ribosomal subunit protein bL32 (56 aa).

This sequence belongs to the bacterial ribosomal protein bL32 family.

In Synechococcus sp. (strain CC9311), this protein is Large ribosomal subunit protein bL32.